The chain runs to 370 residues: MAVKRDYYEVLGVQRNASQDEIKKAFRRLARQYHPDVNKAPDAEAKFKEINEAYEVLSDPEKRSMYDRFGHAGPTAAPGFDPFASADPFSSIFETFFGGTMRGTQRGPQRGADLRYTLSISFEEAIFGVEKTIEYRRMETCPACRGSGAEPGTEPVRCPKCGGLGEIRQRAPLFNMVTVTTCDMCRGEGTVIAIPCRECRGEGRIRQTRKITVRVPPGVDSSAQIRISGEGDAGPRGGPYGNLYVVIDVQPHPFFIREGNDIILELPLNVAQAALGTEVDVPTIEGTERLHIPPGVQNGAVFRIRGKGAPFLRSSGRGDQIVVVRVVVPTNLNDHQRRLFEELARSLENEPIGNQRDEGFFGRIKNALGL.

The J domain occupies 6–70; that stretch reads DYYEVLGVQR…EKRSMYDRFG (65 aa). The CR-type zinc finger occupies 128–208; that stretch reads GVEKTIEYRR…CRGEGRIRQT (81 aa). Residues C141, C144, C158, C161, C182, C185, C196, and C199 each contribute to the Zn(2+) site. CXXCXGXG motif repeat units lie at residues 141-148, 158-165, 182-189, and 196-203; these read CPACRGSG, CPKCGGLG, CDMCRGEG, and CRECRGEG.

It belongs to the DnaJ family. In terms of assembly, homodimer. It depends on Zn(2+) as a cofactor.

It localises to the cytoplasm. In terms of biological role, participates actively in the response to hyperosmotic and heat shock by preventing the aggregation of stress-denatured proteins and by disaggregating proteins, also in an autonomous, DnaK-independent fashion. Unfolded proteins bind initially to DnaJ; upon interaction with the DnaJ-bound protein, DnaK hydrolyzes its bound ATP, resulting in the formation of a stable complex. GrpE releases ADP from DnaK; ATP binding to DnaK triggers the release of the substrate protein, thus completing the reaction cycle. Several rounds of ATP-dependent interactions between DnaJ, DnaK and GrpE are required for fully efficient folding. Also involved, together with DnaK and GrpE, in the DNA replication of plasmids through activation of initiation proteins. The sequence is that of Chaperone protein DnaJ from Roseiflexus castenholzii (strain DSM 13941 / HLO8).